The following is a 521-amino-acid chain: Bifunctional purine biosynthesis protein PurH (521 aa).

An MGS-like domain is found at M1 to V147.

The protein belongs to the PurH family.

It catalyses the reaction (6R)-10-formyltetrahydrofolate + 5-amino-1-(5-phospho-beta-D-ribosyl)imidazole-4-carboxamide = 5-formamido-1-(5-phospho-D-ribosyl)imidazole-4-carboxamide + (6S)-5,6,7,8-tetrahydrofolate. It carries out the reaction IMP + H2O = 5-formamido-1-(5-phospho-D-ribosyl)imidazole-4-carboxamide. Its pathway is purine metabolism; IMP biosynthesis via de novo pathway; 5-formamido-1-(5-phospho-D-ribosyl)imidazole-4-carboxamide from 5-amino-1-(5-phospho-D-ribosyl)imidazole-4-carboxamide (10-formyl THF route): step 1/1. It functions in the pathway purine metabolism; IMP biosynthesis via de novo pathway; IMP from 5-formamido-1-(5-phospho-D-ribosyl)imidazole-4-carboxamide: step 1/1. The polypeptide is Bifunctional purine biosynthesis protein PurH (Geotalea uraniireducens (strain Rf4) (Geobacter uraniireducens)).